The sequence spans 505 residues: MSRSYNDELQFLEKINKNCWRIRKGFVPNMQVEGVFYVNDALEKLMFEELRNACRGGGVGGFLPAMKQIGNVAALPGIVHRSIGLPDVHSGYGFAIGNMAAFDMNDPEAVVSPGGVGFDINCGVRLLRTNLDESDVQPVKEQLAQAMFDHIPVGVGSKGVIPMNAKDLEEALEMGVDWSLREGYAWAEDKEHCEEYGRMLQADPNKVSARAKKRGLPQLGTLGAGNHYAEIQVVDEIFNEYAAKKMGIDHKGQVCVMIHSGSRGLGHQVATDALVAMEKAMKRDKIIVNDRQLACARIASPEGQDYLKGMAAAGNYAWVNRSSMTFLTRQAFAKVFNTTPDDLDLHVIYDVSHNIAKVEQHVVDGKERTLLVHRKGSTRAFPPHHPLIAVDYQLTGQPVLIGGTMGTCSYVLTGTEQGMTETFGTTCHGAGRALSRAKSRRNLDFQDVLDKLADMGIAIRVASPKLVMEEAPESYKNVTDVVNTCHDAGISKKAIKLRPIAVIKG.

4 residues coordinate Mn(2+): Asp119, Cys122, His227, and His259. Position 226 to 230 (226 to 230 (NHYAE)) interacts with GMP. Ser300 is subject to Phosphoserine. His353 contacts Mn(2+). Residues 353–354 (HN), 402–405 (GGTM), Ser409, and 428–431 (HGAG) each bind GMP. Residue His428 is the GMP-histidine intermediate of the active site. A Glycyl lysine isopeptide (Lys-Gly) (interchain with G-Cter in SUMO2) cross-link involves residue Lys496. Lys504 is a GMP binding site.

It belongs to the RtcB family. Catalytic component of the tRNA-splicing ligase complex. Mn(2+) is required as a cofactor.

It localises to the nucleus. The protein localises to the cytoplasm. It carries out the reaction a 3'-end 3'-phospho-ribonucleotide-RNA + a 5'-end dephospho-ribonucleoside-RNA + GTP = a ribonucleotidyl-ribonucleotide-RNA + GMP + diphosphate. It catalyses the reaction a 3'-end 2',3'-cyclophospho-ribonucleotide-RNA + a 5'-end dephospho-ribonucleoside-RNA + GTP + H2O = a ribonucleotidyl-ribonucleotide-RNA + GMP + diphosphate + H(+). Catalytic subunit of the tRNA-splicing ligase complex that acts by directly joining spliced tRNA halves to mature-sized tRNAs by incorporating the precursor-derived splice junction phosphate into the mature tRNA as a canonical 3',5'-phosphodiester. May act as an RNA ligase with broad substrate specificity, and may function toward other RNAs. The chain is RNA-splicing ligase RtcB homolog from Sus scrofa (Pig).